The following is a 265-amino-acid chain: 2-C-methyl-D-erythritol 4-phosphate cytidylyltransferase (265 aa).

A compositionally biased stretch (basic and acidic residues) spans 231 to 241; sequence DRGGASREAER. Residues 231–265 form a disordered region; sequence DRGGASREAERSAMPSAATSVFSGARSAASGSEEV. Over residues 253–265 the composition is skewed to low complexity; that stretch reads SGARSAASGSEEV.

Belongs to the IspD/TarI cytidylyltransferase family. IspD subfamily.

It catalyses the reaction 2-C-methyl-D-erythritol 4-phosphate + CTP + H(+) = 4-CDP-2-C-methyl-D-erythritol + diphosphate. The protein operates within isoprenoid biosynthesis; isopentenyl diphosphate biosynthesis via DXP pathway; isopentenyl diphosphate from 1-deoxy-D-xylulose 5-phosphate: step 2/6. Catalyzes the formation of 4-diphosphocytidyl-2-C-methyl-D-erythritol from CTP and 2-C-methyl-D-erythritol 4-phosphate (MEP). The polypeptide is 2-C-methyl-D-erythritol 4-phosphate cytidylyltransferase (Xanthomonas campestris pv. campestris (strain 8004)).